The primary structure comprises 82 residues: Proline, histidine and glycine-rich protein 1 (82 aa).

The tract at residues 20 to 82 (HCGPPPGHGP…PGHPPPGPHH (63 aa)) is disordered.

The protein is Proline, histidine and glycine-rich protein 1 (PHGR1) of Homo sapiens (Human).